A 224-amino-acid polypeptide reads, in one-letter code: Putative adhesin A1G_07050 (224 aa).

Residues 1–22 form the signal peptide; it reads MKKLLLIAATSATILSSSVSFA.

In Rickettsia rickettsii (strain Sheila Smith), this protein is Putative adhesin A1G_07050.